The following is a 178-amino-acid chain: Ribosome maturation factor RimP (178 aa).

The protein belongs to the RimP family.

Its subcellular location is the cytoplasm. Its function is as follows. Required for maturation of 30S ribosomal subunits. In Corynebacterium glutamicum (strain ATCC 13032 / DSM 20300 / JCM 1318 / BCRC 11384 / CCUG 27702 / LMG 3730 / NBRC 12168 / NCIMB 10025 / NRRL B-2784 / 534), this protein is Ribosome maturation factor RimP.